The sequence spans 20 residues: Short cationic peptide-4c (20 aa).

Glu-20 carries the post-translational modification Glutamic acid 1-amide.

In terms of tissue distribution, expressed by the venom gland.

The protein localises to the secreted. The protein is Short cationic peptide-4c of Cupiennius salei (American wandering spider).